Reading from the N-terminus, the 183-residue chain is ATP-dependent protease subunit HslV (183 aa).

Residue Thr13 is part of the active site. Residues Gly168, Cys171, and Thr174 each contribute to the Na(+) site.

It belongs to the peptidase T1B family. HslV subfamily. As to quaternary structure, a double ring-shaped homohexamer of HslV is capped on each side by a ring-shaped HslU homohexamer. The assembly of the HslU/HslV complex is dependent on binding of ATP.

Its subcellular location is the cytoplasm. The enzyme catalyses ATP-dependent cleavage of peptide bonds with broad specificity.. Its activity is regulated as follows. Allosterically activated by HslU binding. Its function is as follows. Protease subunit of a proteasome-like degradation complex believed to be a general protein degrading machinery. This chain is ATP-dependent protease subunit HslV, found in Xanthomonas campestris pv. campestris (strain ATCC 33913 / DSM 3586 / NCPPB 528 / LMG 568 / P 25).